Consider the following 187-residue polypeptide: Threonylcarbamoyl-AMP synthase (187 aa).

The YrdC-like domain maps to 3–187 (QVTPSQISGI…IQTGHIFRQG (185 aa)).

It belongs to the SUA5 family. TsaC subfamily.

The protein localises to the cytoplasm. It catalyses the reaction L-threonine + hydrogencarbonate + ATP = L-threonylcarbamoyladenylate + diphosphate + H2O. Its function is as follows. Required for the formation of a threonylcarbamoyl group on adenosine at position 37 (t(6)A37) in tRNAs that read codons beginning with adenine. Catalyzes the conversion of L-threonine, HCO(3)(-)/CO(2) and ATP to give threonylcarbamoyl-AMP (TC-AMP) as the acyladenylate intermediate, with the release of diphosphate. In Shewanella amazonensis (strain ATCC BAA-1098 / SB2B), this protein is Threonylcarbamoyl-AMP synthase.